The sequence spans 288 residues: Heme oxygenase 1 (288 aa).

The Cytoplasmic segment spans residues 1-265 (MERPQPDSMP…KPPLNTRSQA (265 aa)). 4 residues coordinate heme b: lysine 18, histidine 25, tyrosine 134, and arginine 183. Residues 223 to 260 (HDTKDQSPSRAPGLRQRASNKVQDSAPVETPRGKPPLN) form a disordered region. Serine 229 is subject to Phosphoserine. The helical; Anchor for type IV membrane protein transmembrane segment at 266 to 288 (PLLRWVLTLSFLVATVAVGLYAM) threads the bilayer.

Belongs to the heme oxygenase family. In terms of assembly, (Microbial infection) Interacts with SARS-CoV-2 ORF3A protein; the interaction promotes ORF3A-induced autophagy but is unlikely to be involved in ORF3A-mediated induction of reticulophagy. As to quaternary structure, homodimer and higher order homooligomer. Oligomerization is crucial for its stability and function in the endoplasmic reticulum. Interacts with FLVCR2; this interaction is potentiated in the presence of heme. In terms of processing, a soluble form arises by proteolytic removal of the membrane anchor. As to expression, expressed at higher levels in renal cancer tissue than in normal tissue (at protein level).

The protein resides in the endoplasmic reticulum membrane. It catalyses the reaction heme b + 3 reduced [NADPH--hemoprotein reductase] + 3 O2 = biliverdin IXalpha + CO + Fe(2+) + 3 oxidized [NADPH--hemoprotein reductase] + 3 H2O + H(+). Catalyzes the oxidative cleavage of heme at the alpha-methene bridge carbon, released as carbon monoxide (CO), to generate biliverdin IXalpha, while releasing the central heme iron chelate as ferrous iron. Affords protection against programmed cell death and this cytoprotective effect relies on its ability to catabolize free heme and prevent it from sensitizing cells to undergo apoptosis. Functionally, (Microbial infection) During SARS-COV-2 infection, promotes SARS-CoV-2 ORF3A-mediated autophagy but is unlikely to be required for ORF3A-mediated induction of reticulophagy. In terms of biological role, catalyzes the oxidative cleavage of heme at the alpha-methene bridge carbon, released as carbon monoxide (CO), to generate biliverdin IXalpha, while releasing the central heme iron chelate as ferrous iron. This chain is Heme oxygenase 1 (HMOX1), found in Homo sapiens (Human).